Here is a 61-residue protein sequence, read N- to C-terminus: Large ribosomal subunit protein uL30 (61 aa).

Belongs to the universal ribosomal protein uL30 family. As to quaternary structure, part of the 50S ribosomal subunit.

This chain is Large ribosomal subunit protein uL30, found in Acidithiobacillus ferrooxidans (strain ATCC 23270 / DSM 14882 / CIP 104768 / NCIMB 8455) (Ferrobacillus ferrooxidans (strain ATCC 23270)).